We begin with the raw amino-acid sequence, 288 residues long: Transformer-2 protein homolog beta (288 aa).

Disordered stretches follow at residues 1 to 114 and 196 to 225; these read MSDS…RANP and TKRP…YDRG. Residue Ser2 is modified to N-acetylserine. Residues Ser2, Ser4, and Ser14 each carry the phosphoserine modification. Residues 17-28 are compositionally biased toward low complexity; that stretch reads ASRSGSAHGSGK. A Phosphoserine modification is found at Ser29. Phosphothreonine is present on Thr33. Basic residues predominate over residues 59–109; that stretch reads RSRRSSRRHYTRSRSRSRSHRRSRSRSYSRDYRRRHSHSHSPMSTRRRHVG. Phosphoserine occurs at positions 83, 85, 87, 95, 97, and 99. Phosphothreonine is present on Thr103. Residues 118-196 form the RRM domain; the sequence is CCLGVFGLSL…RRIRVDFSIT (79 aa). The interval 193-230 is linker; the sequence is FSITKRPHTPTPGIYMGRPTYGSSRRRDYYDRGYDRGY. Residue Lys197 forms a Glycyl lysine isopeptide (Lys-Gly) (interchain with G-Cter in SUMO2) linkage. Residues Thr201 and Thr203 each carry the phosphothreonine modification. Phosphoserine occurs at positions 215 and 237. An Asymmetric dimethylarginine; alternate modification is found at Arg241. Residue Arg241 is modified to Dimethylated arginine; alternate. Omega-N-methylarginine; alternate is present on Arg241. Positions 242 to 288 are disordered; it reads GGGGGGGGWRAAQDRDQIYRRRSPSPYYSRGGYRSRSRSRSYSPRRY. Residues 274-288 show a composition bias toward basic residues; that stretch reads YRSRSRSRSYSPRRY.

Belongs to the splicing factor SR family. In terms of assembly, found in a pre-mRNA exonic splicing enhancer (ESE) complex with TRA2B/SFRS10, SNRNP70, SNRPA1 and SRRM1. Binds to A3 enhancer proteins SFRS4, SFRS5, SFRS6 and SFRS9. Interacts with CPSF6, RBMY1A1, RBMX, RNPS1 and phosphorylated SFRS13A. Interacts with SAFB/SAFB1. Interacts with ILDR1 (via C-terminus) and ILDR2. Phosphorylated in the RS domains.

Its subcellular location is the nucleus. Sequence-specific RNA-binding protein which participates in the control of pre-mRNA splicing. Can either activate or suppress exon inclusion. Acts additively with RBMX to promote exon 7 inclusion of the survival motor neuron SMN2. Activates the splicing of MAPT/Tau exon 10. Alters pre-mRNA splicing patterns by antagonizing the effects of splicing regulators, like RBMX. Binds to the AG-rich SE2 domain in the SMN exon 7 RNA. Binds to pre-mRNA. This Bos taurus (Bovine) protein is Transformer-2 protein homolog beta (TRA2B).